Consider the following 137-residue polypeptide: Gonadotropin subunit beta-1 (137 aa).

Residues 1 to 24 form the signal peptide; the sequence is MYCTHLRMLQLVVMATLWVTPVRA. 5 cysteine pairs are disulfide-bonded: cysteine 32–cysteine 78, cysteine 46–cysteine 93, cysteine 55–cysteine 108, cysteine 59–cysteine 110, and cysteine 113–cysteine 120. N-linked (GlcNAc...) asparagine glycosylation occurs at asparagine 36.

The protein belongs to the glycoprotein hormones subunit beta family. Heterodimer of an alpha and a beta chain.

It localises to the secreted. In terms of biological role, involved in gametogenesis and steroidogenesis. This Coregonus autumnalis (Arctic cisco) protein is Gonadotropin subunit beta-1 (cgba).